The following is a 1218-amino-acid chain: Coatomer subunit alpha-2 (1218 aa).

WD repeat units lie at residues 7–48 (TKSN…DRFD), 49–88 (EHDG…CLFT), 91–132 (GHLD…AVLT), 133–172 (GHNH…KKSV), 202–241 (GHDR…AWEV), 246–285 (GHMN…GIQT), 288–326 (REHD…PAFS), and 363–404 (SLNQ…AGRA). Positions 855–876 (MANGGDGFDAEEGEANEEDGEE) are disordered. Over residues 862 to 876 (FDAEEGEANEEDGEE) the composition is skewed to acidic residues.

In terms of assembly, oligomeric complex that consists of at least the alpha, beta, beta', gamma, delta, epsilon and zeta subunits.

It is found in the cytoplasm. It localises to the golgi apparatus membrane. Its subcellular location is the cytoplasmic vesicle. The protein localises to the COPI-coated vesicle membrane. In terms of biological role, the coatomer is a cytosolic protein complex that binds to dilysine motifs and reversibly associates with Golgi non-clathrin-coated vesicles, which further mediate biosynthetic protein transport from the ER, via the Golgi up to the trans Golgi network. Coatomer complex is required for budding from Golgi membranes, and is essential for the retrograde Golgi-to-ER transport of dilysine-tagged proteins. This Oryza sativa subsp. japonica (Rice) protein is Coatomer subunit alpha-2.